Consider the following 386-residue polypeptide: Ferredoxin--NADP reductase (386 aa).

One can recognise a CpcD-like domain in the interval 9–67; sequence SRMFRYEVVGLRQTAETEKTNYAIRNSGSQFFNVPYDRMNQFMQQITRWGGKIVSIQPL. Positions 104 to 228 constitute an FAD-binding FR-type domain; sequence NNPCIGKVIS…TGPVGKEMLL (125 aa). FAD is bound by residues 163 to 166, 184 to 186, Tyr190, 202 to 204, and Thr243; these read RLYS, CVR, and VCS. Residues Ser166 and Arg186 each contribute to the NADP(+) site. Residues Thr243, 275 to 276, 305 to 306, 315 to 319, 344 to 345, and Glu384 contribute to the NADP(+) site; these read VA, SR, KMYIQ, and GL.

The protein belongs to the ferredoxin--NADP reductase type 1 family. FAD serves as cofactor.

The protein resides in the cellular thylakoid membrane. It carries out the reaction 2 reduced [2Fe-2S]-[ferredoxin] + NADP(+) + H(+) = 2 oxidized [2Fe-2S]-[ferredoxin] + NADPH. This Thermosynechococcus vestitus (strain NIES-2133 / IAM M-273 / BP-1) protein is Ferredoxin--NADP reductase (petH).